The chain runs to 320 residues: Lipoyl synthase (320 aa).

The segment at 1–28 is disordered; the sequence is MVTVVDRVTDRRLRHPEKAHRPDTSVQK. The segment covering 19–28 has biased composition (basic and acidic residues); sequence AHRPDTSVQK. Residues Cys-59, Cys-64, Cys-70, Cys-85, Cys-89, Cys-92, and Ser-298 each contribute to the [4Fe-4S] cluster site. In terms of domain architecture, Radical SAM core spans 71 to 287; it reads WSQRHASFMI…AKIGKVKGFL (217 aa).

The protein belongs to the radical SAM superfamily. Lipoyl synthase family. The cofactor is [4Fe-4S] cluster.

It localises to the cytoplasm. It carries out the reaction [[Fe-S] cluster scaffold protein carrying a second [4Fe-4S](2+) cluster] + N(6)-octanoyl-L-lysyl-[protein] + 2 oxidized [2Fe-2S]-[ferredoxin] + 2 S-adenosyl-L-methionine + 4 H(+) = [[Fe-S] cluster scaffold protein] + N(6)-[(R)-dihydrolipoyl]-L-lysyl-[protein] + 4 Fe(3+) + 2 hydrogen sulfide + 2 5'-deoxyadenosine + 2 L-methionine + 2 reduced [2Fe-2S]-[ferredoxin]. Its pathway is protein modification; protein lipoylation via endogenous pathway; protein N(6)-(lipoyl)lysine from octanoyl-[acyl-carrier-protein]: step 2/2. Catalyzes the radical-mediated insertion of two sulfur atoms into the C-6 and C-8 positions of the octanoyl moiety bound to the lipoyl domains of lipoate-dependent enzymes, thereby converting the octanoylated domains into lipoylated derivatives. In Bartonella henselae (strain ATCC 49882 / DSM 28221 / CCUG 30454 / Houston 1) (Rochalimaea henselae), this protein is Lipoyl synthase.